The primary structure comprises 355 residues: Guanine nucleotide-binding protein G(o) subunit alpha (355 aa).

The segment covering 1 to 17 (MGCASSAEERAAPSAQQ) has biased composition (low complexity). The segment at 1–24 (MGCASSAEERAAPSAQQADREKLK) is disordered. G2 carries the N-myristoyl glycine lipid modification. The S-palmitoyl cysteine moiety is linked to residue C3. Residues 32–355 (KDIKLLLLGA…ANNLRGCGLY (324 aa)) form the G-alpha domain. Positions 35-48 (KLLLLGAGESGKST) are G1 motif. Residues 40–47 (GAGESGKS), 176–182 (LRTRVKT), 201–205 (DVGRG), 201–206 (DVGRGQ), 271–274 (NKKD), and A327 contribute to the GTP site. S47 and T182 together coordinate Mg(2+). Residues 174–182 (DILRTRVKT) are G2 motif. The segment at 197 to 206 (FKLFDVGRGQ) is G3 motif. Positions 267–274 (ILFLNKKD) are G4 motif. Residues 326-330 (TATDT) are G5 motif.

This sequence belongs to the G-alpha family. G(i/o/t/z) subfamily. As to quaternary structure, g proteins are composed of 3 units; alpha, beta and gamma. The alpha chain contains the guanine nucleotide binding site.

Guanine nucleotide-binding proteins (G proteins) are involved as modulators or transducers in various transmembrane signaling systems. The G(o) protein function is not clear. This chain is Guanine nucleotide-binding protein G(o) subunit alpha, found in Manduca sexta (Tobacco hawkmoth).